Reading from the N-terminus, the 81-residue chain is Protein Vpu (81 aa).

Over Met1–Val7 the chain is Extracellular. A helical transmembrane segment spans residues Ala8–Ile28. Residues Glu29 to Met81 are Cytoplasmic-facing. Positions Ala50–Met81 are disordered. Phosphoserine; by host CK2 is present on residues Ser53 and Ser57. The segment covering Ser53–Glu63 has biased composition (acidic residues).

Belongs to the HIV-1 VPU protein family. In terms of assembly, homopentamer. Interacts with host CD4 and BRTC; these interactions induce proteasomal degradation of CD4. Interacts with host BST2; this interaction leads to the degradation of host BST2. Interacts with host FBXW11. Interacts with host AP1M1; this interaction plays a role in the mistrafficking and subsequent degradation of host BST2. Interacts with host RANBP2; this interaction allows Vpu to down-regulate host BLM sumoylation. Post-translationally, phosphorylated by host CK2. This phosphorylation is necessary for interaction with human BTRC and degradation of CD4.

It localises to the host membrane. Ion channel activity is inhibited by hexamethylene amiloride in vitro. Its function is as follows. Enhances virion budding by targeting host CD4 and Tetherin/BST2 to proteasome degradation. Degradation of CD4 prevents any unwanted premature interactions between viral Env and its host receptor CD4 in the endoplasmic reticulum. Degradation of antiretroviral protein Tetherin/BST2 is important for virion budding, as BST2 tethers new viral particles to the host cell membrane. Mechanistically, Vpu bridges either CD4 or BST2 to BTRC, a substrate recognition subunit of the Skp1/Cullin/F-box protein E3 ubiquitin ligase, induces their ubiquitination and subsequent proteasomal degradation. The alteration of the E3 ligase specificity by Vpu seems to promote the degradation of host IKBKB, leading to NF-kappa-B down-regulation and subsequent apoptosis. Acts as a viroporin that forms an oligomeric ion channel in membranes. Modulates the host DNA repair mechanisms to promote degradation of nuclear viral cDNA in cells that are already productively infected in order to suppress immune sensing and proviral hyper-integration (superinfection). Manipulates PML-NBs and modulates SUMOylation of host BLM protein thereby enhancing its DNA-end processing activity toward viral unintegrated linear DNA. Also inhibits RAD52-mediated homologous repair of viral cDNA, preventing the generation of dead-end circular forms of single copies of the long terminal repeat and permitting sustained nucleolytic attack. The protein is Protein Vpu of Human immunodeficiency virus type 1 (HIV-1).